Here is a 443-residue protein sequence, read N- to C-terminus: Xaa-Pro dipeptidase (443 aa).

Mn(2+)-binding residues include Asp-246, Asp-257, His-339, Glu-384, and Glu-423.

Belongs to the peptidase M24B family. Bacterial-type prolidase subfamily. Mn(2+) is required as a cofactor.

It catalyses the reaction Xaa-L-Pro dipeptide + H2O = an L-alpha-amino acid + L-proline. In terms of biological role, splits dipeptides with a prolyl residue in the C-terminal position. This Enterobacter sp. (strain 638) protein is Xaa-Pro dipeptidase.